Reading from the N-terminus, the 424-residue chain is Zona pellucida sperm-binding protein 3 (424 aa).

The signal sequence occupies residues 1–22 (MGLSYGLFICFLLWAGTGLCYP). Residues 23–383 (PTTTEDKTHP…VEGSTSPHTS (361 aa)) are Extracellular-facing. A ZP domain is found at 43 to 305 (ECRHAWLVVN…KACSFIKSSN (263 aa)). Cystine bridges form between cysteine 44–cysteine 138 and cysteine 76–cysteine 97. N-linked (GlcNAc...) asparagine glycosylation is present at asparagine 52. Residues asparagine 123 and asparagine 145 are each glycosylated (N-linked (GlcNAc...) asparagine). Residues threonine 154, threonine 160, and threonine 161 are each glycosylated (O-linked (GalNAc...) threonine). 2 disulfides stabilise this stretch: cysteine 215–cysteine 280 and cysteine 237–cysteine 298. The propeptide at 349 to 424 (RRHVTEEADI…PMICPVSASQ (76 aa)) is removed in mature form. The chain crosses the membrane as a helical span at residues 384 to 404 (VMVGIGLATVLSLTLATIVLG). The Cytoplasmic portion of the chain corresponds to 405 to 424 (LARRHHTASRPMICPVSASQ).

The protein belongs to the ZP domain family. ZPC subfamily. Polymers of ZP2 and ZP3 organized into long filaments cross-linked by ZP1 homodimers. Interacts with ZP1 and ZP2. Post-translationally, proteolytically cleaved before the transmembrane segment to yield the secreted ectodomain incorporated in the zona pellucida. In terms of processing, N-glycosylated. O-glycosylated; removal of O-linked glycans may play an important role in the post-fertilization block to polyspermy. In terms of tissue distribution, expressed in oocytes.

It localises to the zona pellucida. The protein resides in the cell membrane. Functionally, component of the zona pellucida, an extracellular matrix surrounding oocytes which mediates sperm binding, induction of the acrosome reaction and prevents post-fertilization polyspermy. The zona pellucida is composed of 3 to 4 glycoproteins, ZP1, ZP2, ZP3, and ZP4. ZP3 is essential for sperm binding and zona matrix formation. This Felis catus (Cat) protein is Zona pellucida sperm-binding protein 3 (ZP3).